A 99-amino-acid polypeptide reads, in one-letter code: Malonate decarboxylase acyl carrier protein (99 aa).

O-(phosphoribosyl dephospho-coenzyme A)serine is present on serine 25.

In terms of processing, covalently binds the prosthetic group of malonate decarboxylase.

Its subcellular location is the cytoplasm. In terms of biological role, subunit of malonate decarboxylase, it is an acyl carrier protein to which acetyl and malonyl thioester residues are bound via a 2'-(5''-phosphoribosyl)-3'-dephospho-CoA prosthetic group and turn over during the catalytic mechanism. This is Malonate decarboxylase acyl carrier protein (mdcC) from Klebsiella pneumoniae.